The sequence spans 84 residues: Small ribosomal subunit protein bS16 (84 aa).

It belongs to the bacterial ribosomal protein bS16 family.

In Cupriavidus pinatubonensis (strain JMP 134 / LMG 1197) (Cupriavidus necator (strain JMP 134)), this protein is Small ribosomal subunit protein bS16.